Here is a 157-residue protein sequence, read N- to C-terminus: Aspartate carbamoyltransferase regulatory chain (157 aa).

Zn(2+)-binding residues include cysteine 108, cysteine 113, cysteine 138, and cysteine 141.

It belongs to the PyrI family. Contains catalytic and regulatory chains. Requires Zn(2+) as cofactor.

Involved in allosteric regulation of aspartate carbamoyltransferase. This chain is Aspartate carbamoyltransferase regulatory chain, found in Korarchaeum cryptofilum (strain OPF8).